Consider the following 174-residue polypeptide: Inactive protein RESTRICTED TEV MOVEMENT 1 (174 aa).

In terms of domain architecture, Jacalin-type lectin spans 1 to 152; the sequence is MKIGPVGKHD…LQYIGVYLRP (152 aa).

This sequence belongs to the jacalin lectin family. In terms of assembly, self-interacts. Interacts with RTM3.

It is found in the cytoplasm. In terms of biological role, unable to mediate restriction of long-distance movement of the pathogenic tobacco etch virus (TEV) without causing a hypersensitive response or inducing systemic acquired resistance. This Arabidopsis thaliana (Mouse-ear cress) protein is Inactive protein RESTRICTED TEV MOVEMENT 1 (RTM1).